The sequence spans 137 residues: MRDHLPPGLPPDPFADDPCDPSAALDAVEPGQPLDQQERIAVEADLADLAVYEALLAHKGIRGLVVCCDECQQDHYHDWDMLRANLLQLLIDGTVRPHEPAYDPEPDSYVTWDYCRGYADASLNQATSDADGYRRRH.

Residues 1–32 form a disordered region; that stretch reads MRDHLPPGLPPDPFADDPCDPSAALDAVEPGQ.

It to M.tuberculosis Rv3412.

This is an uncharacterized protein from Mycobacterium leprae (strain TN).